The primary structure comprises 228 residues: Protein TIFY 10a (228 aa).

The Tify domain maps to 75–110 (REQEKRQLTIFYGGKVLVFDDFPAEKAKDLMQMASK). Positions 164–189 (PQARKASLHRFLEKRKDRLQAKAPYQ) match the Jas motif. Residues 166–173 (ARKASLHR) carry the Nuclear localization signal motif. The interval 175–228 (LEKRKDRLQAKAPYQGSPSDASPVKKELQESQPWLGLGPQVAAPDLSLRQESSQ) is disordered.

It belongs to the TIFY/JAZ family. In terms of assembly, interacts with COI1A and COI1B in a coronatine-dependent manner. Coronatine is an analog of jasmonoyl isoleucine (JA-Ile). Ubiquitinated. Targeted for degradation by the SCF(COI1) E3 ubiquitin ligase-proteasome pathway during jasmonate signaling.

It localises to the nucleus. Functionally, repressor of jasmonate responses. This chain is Protein TIFY 10a, found in Oryza sativa subsp. japonica (Rice).